The primary structure comprises 111 residues: uncharacterized protein (111 aa).

This is an uncharacterized protein from Saccharomyces cerevisiae (strain ATCC 204508 / S288c) (Baker's yeast).